Here is a 674-residue protein sequence, read N- to C-terminus: Probable potassium transport system protein Kup (674 aa).

Helical transmembrane passes span 7–27, 52–72, 95–115, 145–165, 169–189, 204–224, 244–264, 291–311, 342–362, 368–388, 397–417, and 425–445; these read IFWG…TSPL, LSLV…LIAL, WLIL…TLTP, LVTF…TSFI, FGPL…VNLI, LMLL…SVFL, IYLT…GQGA, VYLF…QALI, IYIR…LVYF, MEAA…ILLS, VVFN…FLIS, and GGYV…IWYF.

This sequence belongs to the HAK/KUP transporter (TC 2.A.72) family.

Its subcellular location is the cell membrane. It carries out the reaction K(+)(in) + H(+)(in) = K(+)(out) + H(+)(out). In terms of biological role, transport of potassium into the cell. Likely operates as a K(+):H(+) symporter. The protein is Probable potassium transport system protein Kup of Ligilactobacillus salivarius (strain UCC118) (Lactobacillus salivarius).